The following is a 173-amino-acid chain: Protein C2 (173 aa).

A zinc finger lies at 69 to 85; that stretch reads CNCHFTIHHECNRGFSH.

The protein belongs to the geminiviridae transcriptional activator protein family. Monomer. Interacting with and inactivating host adenosine kinase 2 (ADK2) in the cytoplasm. Interacts with and inhibits host SNF1 kinase.

The protein resides in the host cytoplasm. Functionally, acts as a suppressor of RNA-mediated gene silencing, also known as post-transcriptional gene silencing (PTGS), a mechanism of plant viral defense that limits the accumulation of viral RNAs. Suppresses the host RNA silencing by inhibiting adenosine kinase 2 (ADK2), a kinase involved in a general methylation pathway. Also suppresses the host basal defense by interacting with and inhibiting SNF1 kinase, a key regulator of cell metabolism implicated in innate antiviral defense. Determines pathogenicity. The sequence is that of Protein C2 from Beet curly top virus (strain California/Logan) (BCTV).